We begin with the raw amino-acid sequence, 688 residues long: Glycine--tRNA ligase beta subunit (688 aa).

It belongs to the class-II aminoacyl-tRNA synthetase family. As to quaternary structure, tetramer of two alpha and two beta subunits.

The protein resides in the cytoplasm. The catalysed reaction is tRNA(Gly) + glycine + ATP = glycyl-tRNA(Gly) + AMP + diphosphate. This Listeria welshimeri serovar 6b (strain ATCC 35897 / DSM 20650 / CCUG 15529 / CIP 8149 / NCTC 11857 / SLCC 5334 / V8) protein is Glycine--tRNA ligase beta subunit.